Here is a 68-residue protein sequence, read N- to C-terminus: MEC1-mediated checkpoint protein HUG1 (68 aa).

It localises to the cytoplasm. The protein resides in the nucleus. Involved in the MEC1-mediated checkpoint response to DNA damage and replication arrest. The polypeptide is MEC1-mediated checkpoint protein HUG1 (HUG1) (Saccharomyces cerevisiae (strain ATCC 204508 / S288c) (Baker's yeast)).